Reading from the N-terminus, the 32-residue chain is Cathepsin B-like cysteine proteinase (32 aa).

The propeptide at 1–22 (KPNYKRQFEPFSDELIHYINLE) is activation peptide.

This sequence belongs to the peptidase C1 family.

Its function is as follows. Thiol protease. This chain is Cathepsin B-like cysteine proteinase, found in Fasciola hepatica (Liver fluke).